A 46-amino-acid polypeptide reads, in one-letter code: GPSFCKANGKPCSYHADCCNCCLSGICKPSTNVILPGCSTSSFFRI.

Residues Pro-2 and Pro-11 each carry the 4-hydroxyproline modification. 4 cysteine pairs are disulfide-bonded: Cys-5–Cys-19, Cys-12–Cys-22, Cys-18–Cys-27, and Cys-21–Cys-38. Residue Pro-29 is modified to 4-hydroxyproline. Phe-44 is subject to D-phenylalanine.

Post-translationally, the natural D-Phe form of the peptide is more potent than the synthetic L-Phe form. In terms of tissue distribution, expressed by the venom duct.

It is found in the secreted. Iota-conotoxins bind to voltage-gated sodium channels (Nav) and act as agonists by shifting the voltage-dependence of activation to more hyperpolarized levels. Produces excitatory symptoms when injected intracranially into mice and is lethal at higher doses. Exposure to frog cutaneous pectoris induces spontaneous and repetitive action potentials. This effect is slowly reversible. Natural peptide (with D-Phe) is active on nerve, but not on muscle. Synthetic peptide (with L-Phe) is not active on both nerve and muscle. This is Iota-conotoxin-like r11b from Conus radiatus (Rayed cone).